The chain runs to 65 residues: Large ribosomal subunit protein bL35 (65 aa).

Residues 1-26 form a disordered region; that stretch reads MPKMKSNKGASKRFKKTASGGFKCKQ.

Belongs to the bacterial ribosomal protein bL35 family.

This Idiomarina loihiensis (strain ATCC BAA-735 / DSM 15497 / L2-TR) protein is Large ribosomal subunit protein bL35.